Here is a 328-residue protein sequence, read N- to C-terminus: Formimidoylglutamase (328 aa).

Residues His133, Asp159, His161, Asp163, Asp253, and Asp255 each contribute to the Mn(2+) site.

It belongs to the arginase family. Requires Mn(2+) as cofactor.

The enzyme catalyses N-formimidoyl-L-glutamate + H2O = formamide + L-glutamate. The protein operates within amino-acid degradation; L-histidine degradation into L-glutamate; L-glutamate from N-formimidoyl-L-glutamate (hydrolase route): step 1/1. Functionally, catalyzes the conversion of N-formimidoyl-L-glutamate to L-glutamate and formamide. The chain is Formimidoylglutamase from Streptococcus pyogenes serotype M28 (strain MGAS6180).